The following is a 479-amino-acid chain: Proline--tRNA ligase (479 aa).

The protein belongs to the class-II aminoacyl-tRNA synthetase family. ProS type 3 subfamily. As to quaternary structure, homodimer.

Its subcellular location is the cytoplasm. The catalysed reaction is tRNA(Pro) + L-proline + ATP = L-prolyl-tRNA(Pro) + AMP + diphosphate. Catalyzes the attachment of proline to tRNA(Pro) in a two-step reaction: proline is first activated by ATP to form Pro-AMP and then transferred to the acceptor end of tRNA(Pro). This is Proline--tRNA ligase from Mesomycoplasma hyopneumoniae (strain 7448) (Mycoplasma hyopneumoniae).